The following is a 61-amino-acid chain: MAKKSMIAKQKRTPKFKVQEYTRCERCGRPHSVIRKFKLCRICFRELAYKGQIPGVKKASW.

Zn(2+)-binding residues include C24, C27, C40, and C43.

The protein belongs to the universal ribosomal protein uS14 family. Zinc-binding uS14 subfamily. Part of the 30S ribosomal subunit. Contacts proteins S3 and S10. Zn(2+) is required as a cofactor.

Binds 16S rRNA, required for the assembly of 30S particles and may also be responsible for determining the conformation of the 16S rRNA at the A site. The protein is Small ribosomal subunit protein uS14B of Bacillus licheniformis (strain ATCC 14580 / DSM 13 / JCM 2505 / CCUG 7422 / NBRC 12200 / NCIMB 9375 / NCTC 10341 / NRRL NRS-1264 / Gibson 46).